Consider the following 129-residue polypeptide: Small ribosomal subunit protein eS6 (129 aa).

This sequence belongs to the eukaryotic ribosomal protein eS6 family.

In Methanocorpusculum labreanum (strain ATCC 43576 / DSM 4855 / Z), this protein is Small ribosomal subunit protein eS6.